The chain runs to 330 residues: 4-epi-cubebol synthase ((2E,6E)-farnesyl diphosphate cyclizing) (330 aa).

Residues Asp-91 and Glu-96 each contribute to the Mg(2+) site. The DDXXXE motif signature appears at 91–96; sequence DDAFCE. Residue Arg-184 coordinates substrate. Asn-230 and Ser-234 together coordinate Mg(2+). Residue Lys-237 participates in substrate binding. Glu-238 is a Mg(2+) binding site. Substrate is bound at residue 316-317; it reads RY.

It belongs to the terpene synthase family. Mg(2+) serves as cofactor.

The enzyme catalyses (2E,6E)-farnesyl diphosphate + H2O = 4-epi-cubebol + diphosphate. It functions in the pathway secondary metabolite biosynthesis; terpenoid biosynthesis. In terms of biological role, catalyzes the conversion of (2E,6E)-farnesyl diphosphate (FPP) to yield the bicyclic sesquiterpenol 4-epi-cubebol via a 1,10-cyclization, which requires the abstraction of the pyrophosphate from FPP to yield a (E,E)-germacradienyl cation. The only accepted substrate is (2E,6E)-farnesyl diphosphate (FPP). This is 4-epi-cubebol synthase ((2E,6E)-farnesyl diphosphate cyclizing) from Streptosporangium roseum (strain ATCC 12428 / DSM 43021 / JCM 3005 / KCTC 9067 / NCIMB 10171 / NRRL 2505 / NI 9100).